Here is a 294-residue protein sequence, read N- to C-terminus: Non-selective voltage-gated ion channel VDAC2 (294 aa).

At Ala-2 the chain carries N-acetylalanine. ATP is bound by residues Lys-23 and Lys-31. Lys-31 is modified (N6-acetyllysine; alternate). Position 31 is an N6-succinyllysine; alternate (Lys-31). Lys-31 participates in a covalent cross-link: Glycyl lysine isopeptide (Lys-Gly) (interchain with G-Cter in ubiquitin); alternate. Transmembrane regions (beta stranded) follow at residues 37–46 and 50–58; these read LVKLDVKTKS and VEFSTSGSS. Residues Lys-64 and Lys-72 each participate in a glycyl lysine isopeptide (Lys-Gly) (interchain with G-Cter in ubiquitin) cross-link. Residues 65–75 form a beta stranded membrane-spanning segment; it reads VTGTLETKYKW. Tyr-78 is subject to Phosphotyrosine. Transmembrane regions (beta stranded) follow at residues 80 to 87, 91 to 100, and 106 to 115; these read LTFTEKWN, TLGTEIAIED, and LKLTFDTTFS. The residue at position 118 (Thr-118) is a Phosphothreonine. Lys-120 carries the post-translational modification N6-acetyllysine; alternate. Residue Lys-120 forms a Glycyl lysine isopeptide (Lys-Gly) (interchain with G-Cter in ubiquitin); alternate linkage. Glycyl lysine isopeptide (Lys-Gly) (interchain with G-Cter in ubiquitin) cross-links involve residues Lys-121 and Lys-124. The next 4 membrane-spanning stretches (beta stranded) occupy residues 122–131, 134–141, 148–156, and 161–169; these read SGKIKSSYKR, INLGCDVD, AIHGSAVFG, and LAGYQMTFD. Lys-172 participates in a covalent cross-link: Glycyl lysine isopeptide (Lys-Gly) (interchain with G-Cter in ubiquitin). 6 beta stranded membrane-spanning segments follow: residues 174–186, 189–196, 200–209, 213–222, 229–238, and 242–249; these read KLTR…GYRT, FQLHTNVN, EFGGSIYQKV, LDTSVNLAWT, RFGIAAKYQL, and ASISAKVN. A Phosphoserine modification is found at Ser-251. NAD(+)-binding positions include 253 to 255 and 271 to 275; these read LIG and SALVD. The next 2 beta stranded transmembrane spans lie at 253-262 and 265-274; these read LIGVGYTQTL and GVKLTLSALV. Lys-277 carries the post-translational modification N6-acetyllysine; alternate. Residue Lys-277 forms a Glycyl lysine isopeptide (Lys-Gly) (interchain with G-Cter in ubiquitin); alternate linkage. Residues 284 to 293 traverse the membrane as a beta stranded segment; it reads HKVGLALELE. Lys-285 is covalently cross-linked (Glycyl lysine isopeptide (Lys-Gly) (interchain with G-Cter in ubiquitin)).

The protein belongs to the eukaryotic mitochondrial porin family. As to quaternary structure, monomer, homodimer and higher order oligomers; formation of higher order structures is necessary for scramblase activity. Interacts with ARMC12 in a TBC1D21-dependent manner. Interacts with KLC3. Interacts with SPATA33. Interacts with PPP3CC in a SPATA33-dependent manner. Post-translationally, ubiquitinated by PRKN during mitophagy, leading to its degradation and enhancement of mitophagy. Deubiquitinated by USP30. In terms of tissue distribution, expressed in erythrocytes (at protein level). Expressed in all tissues examined.

The protein resides in the mitochondrion outer membrane. Its subcellular location is the membrane. It catalyses the reaction chloride(in) = chloride(out). It carries out the reaction K(+)(in) = K(+)(out). The enzyme catalyses a 1,2-diacyl-sn-glycero-3-phospho-L-serine(in) = a 1,2-diacyl-sn-glycero-3-phospho-L-serine(out). The catalysed reaction is a 1,2-diacyl-sn-glycero-3-phosphocholine(in) = a 1,2-diacyl-sn-glycero-3-phosphocholine(out). It catalyses the reaction a 1,2-diacyl-sn-glycero-3-phospho-(1D-myo-inositol)(in) = a 1,2-diacyl-sn-glycero-3-phospho-(1D-myo-inositol)(out). Its function is as follows. Non-selective voltage-gated ion channel that mediates the transport of anions and cations through the mitochondrion outer membrane and plasma membrane. The channel adopts an open conformation at zero mV and a closed conformation at both positive and negative potentials. There are two populations of channels; the main that functions in a lower open-state conductance with lower ion selectivity, that switch, in a voltage-dependent manner, from the open to a low-conducting 'closed' state and the other that has a normal ion selectivity in the typical high conductance, 'open' state. Binds various lipids, including the sphingolipid ceramide, the phospholipid phosphatidylcholine, and the sterols cholesterol and oxysterol. Binding of ceramide promotes the mitochondrial outer membrane permeabilization (MOMP) apoptotic pathway. In terms of biological role, catalyzes the scrambling of phospholipids across the outer mitochondrial membrane; the mechanism is unrelated to channel activity and is capable of translocating both anionic and zwitterionic phospholipids. The protein is Non-selective voltage-gated ion channel VDAC2 of Homo sapiens (Human).